The following is an 866-amino-acid chain: N-alpha-acetyltransferase 15, NatA auxiliary subunit (866 aa).

4 TPR repeats span residues 46 to 79 (GETLAMKGLTLNCLGKKEEAYELVRRGLRNDLKS), 80 to 113 (HVCWHVYGLLQRSDKKYDEAIKCYRNALKWDKDN), 148 to 184 (RASWIGYAIAYHLLEDYEMAAKILEEFRKTQQTSPDK), and 224 to 257 (LAVEETKGELLLQLCRLEDAADVYRGLQERNPEN). Lys262 carries the N6-acetyllysine modification. Ser302 is subject to Phosphoserine. TPR repeat units follow at residues 374–407 (LWVQYYLAQHYDKIGQPSIALEYINTAIESTPTL), 409–441 (ELFLVKAKIYKHAGNIKEAARWMDEAQALDTAD), and 485–522 (MWFQTECAQAYKAMNKFGEALKKCYEIERHFIEITDDQ). The segment at 500-866 (KFGEALKKCY…AEAEELANEI (367 aa)) is interaction with HYPK. Residues Ser537 and Ser588 each carry the phosphoserine modification. The span at 579–594 (EHEADTANMSDKELKK) shows a compositional bias: basic and acidic residues. Residues 579–642 (EHEADTANMS…EEIGGPKEEL (64 aa)) are disordered. Basic residues predominate over residues 595-604 (LRNKQRRAQK). A compositionally biased stretch (basic and acidic residues) spans 606-621 (AQIEEEKKNAEKEKQQ). The stretch at 672 to 705 (IETHLFAFEIYFRKEKFLLMLQSVKRAFAIDSSH) is one TPR 8 repeat. Lys735 and Lys756 each carry N6-acetyllysine. Phosphoserine is present on residues Ser855 and Ser856.

In terms of assembly, component of the N-terminal acetyltransferase A (NatA) complex composed of NAA10 or probably NAA11 and NAA15. Interacts with XRCC6, NAA50 and XRCC5. Associates with HYPK when in a complex with NAA10. Interaction with HYPK reduces the capacity to interact with NAA50. In terms of processing, cleaved by caspases during apoptosis.

The protein localises to the cytoplasm. Its subcellular location is the nucleus. In terms of biological role, auxillary subunit of the N-terminal acetyltransferase A (NatA) complex which displays alpha (N-terminal) acetyltransferase activity. The NAT activity may be important for vascular, hematopoietic and neuronal growth and development. Required to control retinal neovascularization in adult ocular endothelial cells. In complex with XRCC6 and XRCC5 (Ku80), up-regulates transcription from the osteocalcin promoter. The sequence is that of N-alpha-acetyltransferase 15, NatA auxiliary subunit (NAA15) from Pongo abelii (Sumatran orangutan).